A 331-amino-acid polypeptide reads, in one-letter code: PTS-dependent dihydroxyacetone kinase 2, dihydroxyacetone-binding subunit DhaK (331 aa).

Residues 7–328 enclose the DhaK domain; sequence DGYEAVEEML…LDTPCDTPYF (322 aa). Residues 55-58 and aspartate 111 each bind dihydroxyacetone; that span reads GSGH. Histidine 58 acts as the Proton acceptor in catalysis. Residue histidine 218 is the Tele-hemiaminal-histidine intermediate of the active site.

As to quaternary structure, homodimer. The dihydroxyacetone kinase complex is composed of a homodimer of DhaM, a homodimer of DhaK and the subunit DhaL.

The protein localises to the cytoplasm. It catalyses the reaction dihydroxyacetone + phosphoenolpyruvate = dihydroxyacetone phosphate + pyruvate. It participates in polyol metabolism; glycerol degradation. Dihydroxyacetone binding subunit of the dihydroxyacetone kinase, which is responsible for the phosphoenolpyruvate (PEP)-dependent phosphorylation of dihydroxyacetone via a phosphoryl group transfer from DhaL-ATP. The chain is PTS-dependent dihydroxyacetone kinase 2, dihydroxyacetone-binding subunit DhaK from Listeria innocua serovar 6a (strain ATCC BAA-680 / CLIP 11262).